A 488-amino-acid chain; its full sequence is Centrosomal protein cep57l1 (488 aa).

Residues 71 to 226 adopt a coiled-coil conformation; the sequence is LESEKTHARD…AQVQTSLEVN (156 aa). Disordered regions lie at residues 232 to 272 and 311 to 342; these read SASS…PPSK and PRVS…LMSS. Basic residues predominate over residues 241 to 250; it reads RKVKKKKQSK. Basic and acidic residues-rich tracts occupy residues 259-270 and 314-325; these read PSSKEPLSKEPP and SQKDPKTVEHKP. The stretch at 377–403 forms a coiled coil; sequence KNTDMREDLERELDYLVKQMEIKSDQI. A disordered region spans residues 416 to 464; the sequence is LKKTAKKQPRPPSTTKPAEDEQNIGATDPCTPRNKGNLANGTGTPNSKA. Residues 452–464 are compositionally biased toward polar residues; that stretch reads NLANGTGTPNSKA.

This sequence belongs to the translokin family. As to quaternary structure, interacts with clip1, mis12, ndc80 and zwint. Interacts with gamma-tubulin.

It is found in the cytoplasm. It localises to the cytoskeleton. Its subcellular location is the microtubule organizing center. The protein localises to the centrosome. The protein resides in the chromosome. It is found in the centromere. It localises to the kinetochore. Its subcellular location is the spindle. Functionally, required for spindle microtubule attachment to both kinetochores and centrosomes. Also functions to tether minus-ends of spindle microtubules to centrosomes. May act by forming ring-like structures around microtubules, or by serving as a cross-linker or scaffold at the attachment site. This Xenopus laevis (African clawed frog) protein is Centrosomal protein cep57l1 (cep57l1).